Here is a 668-residue protein sequence, read N- to C-terminus: Alpha-1,4-glucan:maltose-1-phosphate maltosyltransferase (668 aa).

A disordered region spans residues 263–288 (RKGRNNSLTPAPDDPGSPYAIGSEEG). Lys-264, Gln-324, and Asp-359 together coordinate alpha-maltose 1-phosphate. Asp-395 functions as the Nucleophile in the catalytic mechanism. Asn-396 is an alpha-maltose 1-phosphate binding site. Glu-424 functions as the Proton donor in the catalytic mechanism. 535 to 536 (KY) contacts alpha-maltose 1-phosphate.

The protein belongs to the glycosyl hydrolase 13 family. GlgE subfamily. Homodimer.

The catalysed reaction is alpha-maltose 1-phosphate + [(1-&gt;4)-alpha-D-glucosyl](n) = [(1-&gt;4)-alpha-D-glucosyl](n+2) + phosphate. In terms of biological role, maltosyltransferase that uses maltose 1-phosphate (M1P) as the sugar donor to elongate linear or branched alpha-(1-&gt;4)-glucans. Is involved in a branched alpha-glucan biosynthetic pathway from trehalose, together with TreS, Mak and GlgB. The sequence is that of Alpha-1,4-glucan:maltose-1-phosphate maltosyltransferase from Cereibacter sphaeroides (strain ATCC 17023 / DSM 158 / JCM 6121 / CCUG 31486 / LMG 2827 / NBRC 12203 / NCIMB 8253 / ATH 2.4.1.) (Rhodobacter sphaeroides).